Here is a 323-residue protein sequence, read N- to C-terminus: tRNA dimethylallyltransferase (323 aa).

ATP is bound at residue 12–19; that stretch reads GPTAAGKT. 14-19 provides a ligand contact to substrate; sequence TAAGKT. Interaction with substrate tRNA regions lie at residues 37-40 and 161-165; these read DSAL and QRLSR.

This sequence belongs to the IPP transferase family. As to quaternary structure, monomer. Requires Mg(2+) as cofactor.

The enzyme catalyses adenosine(37) in tRNA + dimethylallyl diphosphate = N(6)-dimethylallyladenosine(37) in tRNA + diphosphate. Functionally, catalyzes the transfer of a dimethylallyl group onto the adenine at position 37 in tRNAs that read codons beginning with uridine, leading to the formation of N6-(dimethylallyl)adenosine (i(6)A). This chain is tRNA dimethylallyltransferase, found in Pseudomonas fluorescens (strain SBW25).